Here is a 520-residue protein sequence, read N- to C-terminus: 2-isopropylmalate synthase (520 aa).

Residues Ile-12 to Val-274 form the Pyruvate carboxyltransferase domain. Positions 21, 209, 211, and 245 each coordinate Mn(2+). Residues Arg-396–Ala-520 form a regulatory domain region.

It belongs to the alpha-IPM synthase/homocitrate synthase family. LeuA type 1 subfamily. As to quaternary structure, homodimer. Mn(2+) is required as a cofactor.

It is found in the cytoplasm. The enzyme catalyses 3-methyl-2-oxobutanoate + acetyl-CoA + H2O = (2S)-2-isopropylmalate + CoA + H(+). It functions in the pathway amino-acid biosynthesis; L-leucine biosynthesis; L-leucine from 3-methyl-2-oxobutanoate: step 1/4. Functionally, catalyzes the condensation of the acetyl group of acetyl-CoA with 3-methyl-2-oxobutanoate (2-ketoisovalerate) to form 3-carboxy-3-hydroxy-4-methylpentanoate (2-isopropylmalate). In Xanthomonas campestris pv. campestris (strain B100), this protein is 2-isopropylmalate synthase.